A 513-amino-acid polypeptide reads, in one-letter code: ATP synthase subunit alpha (513 aa).

169–176 (GDRQCGKT) contacts ATP.

This sequence belongs to the ATPase alpha/beta chains family. F-type ATPases have 2 components, CF(1) - the catalytic core - and CF(0) - the membrane proton channel. CF(1) has five subunits: alpha(3), beta(3), gamma(1), delta(1), epsilon(1). CF(0) has three main subunits: a(1), b(2) and c(9-12). The alpha and beta chains form an alternating ring which encloses part of the gamma chain. CF(1) is attached to CF(0) by a central stalk formed by the gamma and epsilon chains, while a peripheral stalk is formed by the delta and b chains.

Its subcellular location is the cell inner membrane. The catalysed reaction is ATP + H2O + 4 H(+)(in) = ADP + phosphate + 5 H(+)(out). In terms of biological role, produces ATP from ADP in the presence of a proton gradient across the membrane. The alpha chain is a regulatory subunit. This is ATP synthase subunit alpha from Burkholderia mallei (strain NCTC 10229).